Reading from the N-terminus, the 296-residue chain is Glycine--tRNA ligase alpha subunit (296 aa).

It belongs to the class-II aminoacyl-tRNA synthetase family. Tetramer of two alpha and two beta subunits.

It localises to the cytoplasm. It carries out the reaction tRNA(Gly) + glycine + ATP = glycyl-tRNA(Gly) + AMP + diphosphate. In Polynucleobacter necessarius subsp. necessarius (strain STIR1), this protein is Glycine--tRNA ligase alpha subunit.